A 292-amino-acid chain; its full sequence is METYSVWNRIYDYINPIAFKIFDISVHWYGIMYVSAMLIALLIAKAFITYRNERFPITQELLDSFFIWVEIGVILGGRIGYVLIYSPNRWEYLMQPWQMFNPYTNGVFVGISGFSYHGAMAGFVLAAIIFCYVKKQSFWIFMDLSAISIPLGYVFGRIGNFFNHELFGRVIESDSSLRDIGILVNGELRYPSQLFEAFAEGIIVFILLICLLRYAKKPGTLLVAYGVFYALARFVCEYFREADSQMGYFVFGLSMGQILSLVMLVISIFLGLFVFVQKPISSQKIKHQRKKK.

4 consecutive transmembrane segments (helical) span residues 24–44, 65–85, 110–130, and 136–156; these read ISVH…LLIA, FFIW…VLIY, GISG…AIIF, and QSFW…YVFG. A 1,2-diacyl-sn-glycero-3-phospho-(1'-sn-glycerol) is bound at residue R157. The next 3 helical transmembrane spans lie at 192-212, 219-239, and 256-276; these read SQLF…ICLL, GTLL…CEYF, and GQIL…FVFV.

It belongs to the Lgt family.

The protein resides in the cell inner membrane. The catalysed reaction is L-cysteinyl-[prolipoprotein] + a 1,2-diacyl-sn-glycero-3-phospho-(1'-sn-glycerol) = an S-1,2-diacyl-sn-glyceryl-L-cysteinyl-[prolipoprotein] + sn-glycerol 1-phosphate + H(+). It functions in the pathway protein modification; lipoprotein biosynthesis (diacylglyceryl transfer). Functionally, catalyzes the transfer of the diacylglyceryl group from phosphatidylglycerol to the sulfhydryl group of the N-terminal cysteine of a prolipoprotein, the first step in the formation of mature lipoproteins. The polypeptide is Phosphatidylglycerol--prolipoprotein diacylglyceryl transferase (Helicobacter hepaticus (strain ATCC 51449 / 3B1)).